We begin with the raw amino-acid sequence, 434 residues long: MKTQYSLIRKIWAHSVTEFLKSQWFFICLAILIVIARFAPNFARDGGLIKGQYSIGYGCVAWIFLQSGLGMKSRSLMANMLNWRAHATILVLSFLITSSIVYGFCCAVKAANDPKIDDWVLIGLILTATCPTTVASNVIMTTNAGGNSLLCVCEVFIGNLLGAFITPALVQMFTNRAPFAYGNPATGNGIGALYGRVMKQVGLSVFVPLFVGQVIQNCFPKGTAYYLGFLKKYHIKIGSYMLLLIMFSSFSTAFYQDAFTSVSHVCIIFLCFFNLGIYIFFTGLSYLCARPWFILKLFPHEPIEGKSTRLYRYSYNIFRPFYYSKEDAICIMFCGPAKTAALGVSLITSQYGDKKEHLGKLLVPLVLYQVEQVMTANFFVSLFKRWIQKDAQADGSESSCANENEEVDLEKIISIGTGENQSVLSNNVPYTQPR.

Over 1-15 the chain is Cytoplasmic; the sequence is MKTQYSLIRKIWAHS. Residues 16 to 36 form a helical membrane-spanning segment; the sequence is VTEFLKSQWFFICLAILIVIA. At 37–50 the chain is on the extracellular side; sequence RFAPNFARDGGLIK. The helical transmembrane segment at 51-71 threads the bilayer; sequence GQYSIGYGCVAWIFLQSGLGM. Residues 72 to 87 lie on the Cytoplasmic side of the membrane; sequence KSRSLMANMLNWRAHA. Residues 88 to 108 traverse the membrane as a helical segment; sequence TILVLSFLITSSIVYGFCCAV. The Extracellular segment spans residues 109–118; sequence KAANDPKIDD. A helical membrane pass occupies residues 119-139; the sequence is WVLIGLILTATCPTTVASNVI. Residues 140 to 149 are Cytoplasmic-facing; that stretch reads MTTNAGGNSL. A helical membrane pass occupies residues 150–170; sequence LCVCEVFIGNLLGAFITPALV. Over 171–199 the chain is Extracellular; the sequence is QMFTNRAPFAYGNPATGNGIGALYGRVMK. A helical membrane pass occupies residues 200-220; sequence QVGLSVFVPLFVGQVIQNCFP. Topologically, residues 221 to 234 are cytoplasmic; the sequence is KGTAYYLGFLKKYH. Residues 235 to 255 traverse the membrane as a helical segment; the sequence is IKIGSYMLLLIMFSSFSTAFY. Over 256-264 the chain is Extracellular; it reads QDAFTSVSH. Residues 265 to 285 traverse the membrane as a helical segment; that stretch reads VCIIFLCFFNLGIYIFFTGLS. The Cytoplasmic portion of the chain corresponds to 286–327; that stretch reads YLCARPWFILKLFPHEPIEGKSTRLYRYSYNIFRPFYYSKED. The helical transmembrane segment at 328–348 threads the bilayer; sequence AICIMFCGPAKTAALGVSLIT. The Extracellular portion of the chain corresponds to 349–362; that stretch reads SQYGDKKEHLGKLL. Residues 363-383 traverse the membrane as a helical segment; that stretch reads VPLVLYQVEQVMTANFFVSLF. Over 384-434 the chain is Cytoplasmic; that stretch reads KRWIQKDAQADGSESSCANENEEVDLEKIISIGTGENQSVLSNNVPYTQPR. Serine 425 carries the phosphoserine modification.

Belongs to the bile acid:sodium symporter (BASS) (TC 2.A.28) family.

The protein resides in the cell membrane. The protein localises to the bud neck. Its function is as follows. Solute carrier protein that negatively regulates the cytosolic calcium homeostasis in response to high levels of extracellular calcium. In Saccharomyces cerevisiae (strain ATCC 204508 / S288c) (Baker's yeast), this protein is Solute carrier RCH1.